Reading from the N-terminus, the 354-residue chain is Endo-1,4-beta-xylanase 1 (354 aa).

The 321-residue stretch at serine 19 to threonine 339 folds into the GH10 domain. A glycan (N-linked (GlcNAc...) asparagine) is linked at asparagine 117. Glutamate 147 functions as the Proton donor in the catalytic mechanism. Glutamate 261 (nucleophile) is an active-site residue. Cysteine 289 and cysteine 295 are joined by a disulfide.

It belongs to the glycosyl hydrolase 10 (cellulase F) family.

It localises to the secreted. The enzyme catalyses Endohydrolysis of (1-&gt;4)-beta-D-xylosidic linkages in xylans.. It functions in the pathway glycan degradation; xylan degradation. Its function is as follows. Endo-1,4-beta-xylanase involved in the hydrolysis of xylan, a major structural heterogeneous polysaccharide found in plant biomass representing the second most abundant polysaccharide in the biosphere, after cellulose. Plays an important role in causing fusarium head blight (FHB) on cereal crops. This chain is Endo-1,4-beta-xylanase 1 (XYL1), found in Gibberella zeae (strain ATCC MYA-4620 / CBS 123657 / FGSC 9075 / NRRL 31084 / PH-1) (Wheat head blight fungus).